We begin with the raw amino-acid sequence, 194 residues long: Probable GTP-binding protein EngB (194 aa).

The EngB-type G domain maps to 19-193 (DCIQICFWGR…VLFIEENIFK (175 aa)). GTP-binding positions include 27–34 (GRSNVGKS), 53–57 (GRTQF), 70–73 (DLPG), 137–140 (TKID), and 172–174 (VSS). Positions 34 and 55 each coordinate Mg(2+).

This sequence belongs to the TRAFAC class TrmE-Era-EngA-EngB-Septin-like GTPase superfamily. EngB GTPase family. The cofactor is Mg(2+).

In terms of biological role, necessary for normal cell division and for the maintenance of normal septation. The protein is Probable GTP-binding protein EngB of Mycoplasmopsis agalactiae (strain NCTC 10123 / CIP 59.7 / PG2) (Mycoplasma agalactiae).